The primary structure comprises 145 residues: Fatty acid-binding protein homolog 4 (145 aa).

The protein belongs to the calycin superfamily. Fatty-acid binding protein (FABP) family.

The protein is Fatty acid-binding protein homolog 4 (lbp-4) of Caenorhabditis elegans.